We begin with the raw amino-acid sequence, 226 residues long: MIKMQVWKKLFAKSPFKPLIRHAEVVVQTVETLEKALDSWARGDYENMKEYAKKVDDLEDIADKIKSELRDSITSKLLMPVQRTDILEYLHMQDKIADAAEDTAKWLLIKRNLDSIPNDIKDIILKMGKESIKAAKLVYEAIKQLDNVLESGFAEKEIKKEYKIIKQIEEVESKIDGLDSKLMEIVFTSELDWKDGLYILNIARTLSNISDKAKDTAERIRVLMNK.

Belongs to the UPF0111 family.

The polypeptide is UPF0111 protein PH0637 (Pyrococcus horikoshii (strain ATCC 700860 / DSM 12428 / JCM 9974 / NBRC 100139 / OT-3)).